A 429-amino-acid chain; its full sequence is UDP-N-acetylglucosamine 1-carboxyvinyltransferase 2 (429 aa).

22–23 (KN) contributes to the phosphoenolpyruvate binding site. Residue Arg-92 coordinates UDP-N-acetyl-alpha-D-glucosamine. The active-site Proton donor is Cys-116. Cys-116 is modified (2-(S-cysteinyl)pyruvic acid O-phosphothioketal). Residues 121-125 (RPIDQ), Asp-305, and Ile-327 contribute to the UDP-N-acetyl-alpha-D-glucosamine site.

This sequence belongs to the EPSP synthase family. MurA subfamily.

It is found in the cytoplasm. It catalyses the reaction phosphoenolpyruvate + UDP-N-acetyl-alpha-D-glucosamine = UDP-N-acetyl-3-O-(1-carboxyvinyl)-alpha-D-glucosamine + phosphate. Its pathway is cell wall biogenesis; peptidoglycan biosynthesis. Cell wall formation. Adds enolpyruvyl to UDP-N-acetylglucosamine. The chain is UDP-N-acetylglucosamine 1-carboxyvinyltransferase 2 from Bacillus subtilis (strain 168).